The chain runs to 471 residues: NALCN channel auxiliary factor 2 (471 aa).

The helical transmembrane segment at Leu47–Ala67 threads the bilayer. A disordered region spans residues Ser76–Gly115. Pro residues predominate over residues Pro90–Gly105. An N-linked (GlcNAc...) asparagine glycan is attached at Asn120. Disordered regions lie at residues Glu158 to Phe178 and His399 to Arg424. Residues Thr161 to Ser171 show a composition bias toward pro residues. A helical transmembrane segment spans residues Leu432–Gly452.

It belongs to the NALF family.

It is found in the membrane. In terms of biological role, probable component of the NALCN channel complex, a channel that regulates the resting membrane potential and controls neuronal excitability. This chain is NALCN channel auxiliary factor 2 (Nalf2), found in Mus musculus (Mouse).